Reading from the N-terminus, the 434-residue chain is UDP-N-acetylglucosamine 1-carboxyvinyltransferase (434 aa).

Residue 22-23 coordinates phosphoenolpyruvate; that stretch reads KN. Arg-97 is a UDP-N-acetyl-alpha-D-glucosamine binding site. Asp-121 functions as the Proton donor in the catalytic mechanism. UDP-N-acetyl-alpha-D-glucosamine-binding residues include Asp-319 and Met-341.

It belongs to the EPSP synthase family. MurA subfamily.

The protein localises to the cytoplasm. The enzyme catalyses phosphoenolpyruvate + UDP-N-acetyl-alpha-D-glucosamine = UDP-N-acetyl-3-O-(1-carboxyvinyl)-alpha-D-glucosamine + phosphate. Its pathway is cell wall biogenesis; peptidoglycan biosynthesis. Cell wall formation. Adds enolpyruvyl to UDP-N-acetylglucosamine. The protein is UDP-N-acetylglucosamine 1-carboxyvinyltransferase of Bacteroides thetaiotaomicron (strain ATCC 29148 / DSM 2079 / JCM 5827 / CCUG 10774 / NCTC 10582 / VPI-5482 / E50).